The sequence spans 339 residues: MRIGVVNDMPMAVELLRRLVLSTGEHQVAWIATNGREAVEVCRRDLPDLILMDLAMPVMDGVEATRRIMAETPCSILLVTASIESNLADVYEAMGHGALDAVDIPSVGIEGNASSQSARLLTNKIATIGKLIGDAPTKAKRRMSRAAEPTPRRLIAIGASAGGPAAVAAVLSAFPVDFGGAIVLVQHLDAQFVPGLVDWLGQHTPLPIRPARERDSPQAGTVLVASSADHLVFKSVQQLGYTPSPKDNVYRPSVDVFFESAAQWWPGSVIGVLLTGMGRDGARGLRQLRDKGHLTIAQDRATSAVYGMPKAAADIGAAVDILPLSAIGSRIIEACERST.

Positions 2-119 constitute a Response regulatory domain; it reads RIGVVNDMPM…EGNASSQSAR (118 aa). Aspartate 53 is subject to 4-aspartylphosphate. One can recognise a CheB-type methylesterase domain in the interval 149 to 338; the sequence is PTPRRLIAIG…SRIIEACERS (190 aa). Active-site residues include serine 160, histidine 187, and aspartate 280.

The protein belongs to the CheB family. Post-translationally, phosphorylated by CheA. Phosphorylation of the N-terminal regulatory domain activates the methylesterase activity.

It localises to the cytoplasm. It catalyses the reaction [protein]-L-glutamate 5-O-methyl ester + H2O = L-glutamyl-[protein] + methanol + H(+). It carries out the reaction L-glutaminyl-[protein] + H2O = L-glutamyl-[protein] + NH4(+). Involved in chemotaxis. Part of a chemotaxis signal transduction system that modulates chemotaxis in response to various stimuli. Catalyzes the demethylation of specific methylglutamate residues introduced into the chemoreceptors (methyl-accepting chemotaxis proteins or MCP) by CheR. Also mediates the irreversible deamidation of specific glutamine residues to glutamic acid. The chain is Protein-glutamate methylesterase/protein-glutamine glutaminase from Mesorhizobium japonicum (strain LMG 29417 / CECT 9101 / MAFF 303099) (Mesorhizobium loti (strain MAFF 303099)).